Here is a 682-residue protein sequence, read N- to C-terminus: PWWP domain-containing DNA repair factor 3A (682 aa).

Ser105 is modified (phosphoserine). The interval 121-145 (EKTDADVASQVSSAPSPSLLGEDGQ) is disordered. Positions 127–140 (VASQVSSAPSPSLL) are enriched in low complexity. Residue Ser168 is modified to Phosphoserine. Disordered stretches follow at residues 179–318 (GPKT…GAAP) and 334–369 (GAGD…EEEP). Over residues 203 to 220 (HGQESTTKKRQRNLGEKP) the composition is skewed to basic and acidic residues. A phosphoserine mark is found at Ser345 and Ser346. The segment covering 346–357 (SEESTGFKSTHS) has biased composition (polar residues). Residues 383–444 (VGMLVWLKYQ…KHFDCKEKHA (62 aa)) form the PWWP domain.

This sequence belongs to the PWWP3A family. As to quaternary structure, interacts with TP53BP1 (via BRCT domain); the interaction is not dependent on its phosphorylation status. Binds nucleosomes. Interacts with trimethylated 'Lys-36' of histone H3 (H3K36me3) (in vitro).

The protein localises to the nucleus. Functionally, involved in the DNA damage response pathway by contributing to the maintenance of chromatin architecture. Recruited to the vicinity of DNA breaks by TP53BP1 and plays an accessory role to facilitate damage-induced chromatin changes and promoting chromatin relaxation. Required for efficient DNA repair and cell survival following DNA damage. This chain is PWWP domain-containing DNA repair factor 3A (Pwwp3a), found in Mus musculus (Mouse).